The primary structure comprises 942 residues: AP-1 complex subunit beta (942 aa).

6 HEAT repeats span residues 45–82 (KDVS…NHPD), 117–154 (NITE…VNPE), 156–193 (VENQ…VSKK), 273–313 (DVIR…KRPE), 384–421 (RASE…KYPN), and 458–495 (DNAH…KRPK). Residues 590–700 (GLRNKEEEDE…NDLSFLGGGG (111 aa)) are disordered. Acidic residues predominate over residues 596–609 (EEDEEEPDYVDDDN). Composition is skewed to low complexity over residues 613–645 (QQGG…QQQP) and 664–677 (NNNN…NNNN). The span at 678–693 (MYSPQPQQFNGNSNDL) shows a compositional bias: polar residues.

It belongs to the adaptor complexes large subunit family. In terms of assembly, adaptor protein complex 1 (AP-1) is a heterotetramer composed of two large adaptins (gamma-type subunit and beta-type subunit), a medium adaptin (mu-type subunit) and a small adaptin (sigma-type subunit).

The protein localises to the golgi apparatus. The protein resides in the trans-Golgi network. It localises to the cytoplasmic vesicle. It is found in the clathrin-coated vesicle membrane. Subunit of clathrin-associated adaptor protein complex 1 that plays a role in protein sorting in the trans-Golgi network (TGN) and endosomes. The AP complexes mediate the recruitment of clathrin to membranes and the recognition of sorting signals within the cytosolic tails of transmembrane cargo molecules. Also involved in early steps of phagocytosis and macropinocytosis. The polypeptide is AP-1 complex subunit beta (ap1b1) (Dictyostelium discoideum (Social amoeba)).